Reading from the N-terminus, the 105-residue chain is Replication restart protein PriB (105 aa).

The SSB domain maps to 1-102; sequence MTTNRLVLSG…LHAEQIEFID (102 aa).

It belongs to the PriB family. Homodimer. Interacts with PriA and DnaT. Component of the replication restart primosome. Primosome assembly occurs via a 'hand-off' mechanism. PriA binds to replication forks, subsequently PriB then DnaT bind; DnaT then displaces ssDNA to generate the helicase loading substrate.

In terms of biological role, involved in the restart of stalled replication forks, which reloads the replicative helicase on sites other than the origin of replication; the PriA-PriB pathway is the major replication restart pathway. During primosome assembly it facilitates complex formation between PriA and DnaT on DNA; stabilizes PriA on DNA. Stimulates the DNA unwinding activity of PriA helicase. This chain is Replication restart protein PriB, found in Yersinia pseudotuberculosis serotype O:1b (strain IP 31758).